Reading from the N-terminus, the 387-residue chain is Chaperone protein DnaJ (387 aa).

In terms of domain architecture, J spans 5 to 70 (DYYEILEVSA…QKRQAYDQFG (66 aa)). The CR-type zinc finger occupies 130–208 (GTTVDVRIPT…CRGEGYKHSS (79 aa)). Zn(2+)-binding residues include Cys143, Cys146, Cys160, Cys163, Cys182, Cys185, Cys196, and Cys199. 4 CXXCXGXG motif repeats span residues 143–150 (CESCDGSG), 160–167 (CPTCQGIG), 182–189 (CPNCHGTG), and 196–203 (CKTCRGEG).

Belongs to the DnaJ family. As to quaternary structure, homodimer. The cofactor is Zn(2+).

Its subcellular location is the cytoplasm. In terms of biological role, participates actively in the response to hyperosmotic and heat shock by preventing the aggregation of stress-denatured proteins and by disaggregating proteins, also in an autonomous, DnaK-independent fashion. Unfolded proteins bind initially to DnaJ; upon interaction with the DnaJ-bound protein, DnaK hydrolyzes its bound ATP, resulting in the formation of a stable complex. GrpE releases ADP from DnaK; ATP binding to DnaK triggers the release of the substrate protein, thus completing the reaction cycle. Several rounds of ATP-dependent interactions between DnaJ, DnaK and GrpE are required for fully efficient folding. Also involved, together with DnaK and GrpE, in the DNA replication of plasmids through activation of initiation proteins. This Hydrogenovibrio crunogenus (strain DSM 25203 / XCL-2) (Thiomicrospira crunogena) protein is Chaperone protein DnaJ.